Consider the following 562-residue polypeptide: DNA-binding protein MutS2 (562 aa).

380 to 387 serves as a coordination point for ATP; the sequence is GANSGGKT.

The protein belongs to the DNA mismatch repair MutS family. Archaeal Muts2 subfamily. In terms of assembly, multimer. Requires Co(2+) as cofactor. It depends on Mn(2+) as a cofactor.

In terms of biological role, has ATPase and non-specific DNA-binding activities. May be involved in recombination and/or recombinational repair. Not involved in mismatch repair. This chain is DNA-binding protein MutS2, found in Pyrococcus furiosus (strain ATCC 43587 / DSM 3638 / JCM 8422 / Vc1).